Here is a 114-residue protein sequence, read N- to C-terminus: Biofilm growth-associated repressor (114 aa).

The HTH arsR-type domain occupies 17 to 111 (DMEKRANEVA…ALYTIFCTQE (95 aa)). The segment at residues 51–74 (VGELEQQIGIGQPTLSQQLGVLRE) is a DNA-binding region (H-T-H motif).

Represses an operon that probably comprises itself, PD_1892, PD_1893, PD_1894 and blh. Binds to a palindromic AT-rich sequence spanning the -10 region of the blh promoter and blocks transcription of the operon. The sequence is that of Biofilm growth-associated repressor (bigR) from Xylella fastidiosa (strain Temecula1 / ATCC 700964).